A 668-amino-acid chain; its full sequence is ATP-dependent RNA helicase MSS116, mitochondrial (668 aa).

A mitochondrion-targeting transit peptide spans 1–38 (MLKQLSRSLGIRSSPIVANLIRSKQVCTRGFHISLVKQ). The short motif at 87–115 (DFKGKGYIHDSIINSLHKNDFKELTPIQQ) is the Q motif element. In terms of domain architecture, Helicase ATP-binding spans 119-300 (VPIFNTEKGL…KKHIHPEYEF (182 aa)). Position 132–139 (132–139 (AKTGTGKT)) interacts with ATP. The DEAD box signature appears at 242–245 (DEAD). In terms of domain architecture, Helicase C-terminal spans 332–501 (SLSELHGIMK…NIIDQIESPL (170 aa)). Residues 585–668 (YSDFSRSGMS…EHRRIRDHDE (84 aa)) are disordered. The span at 586 to 597 (SDFSRSGMSQRP) shows a compositional bias: polar residues. Residues 609-636 (NGRGKYGNNRNNDWSYQNKNRYNNNNNR) are compositionally biased toward low complexity. Basic and acidic residues predominate over residues 637–668 (QTERSYDSDRKSHNDWKYEKKFEHRRIRDHDE).

It belongs to the DEAD box helicase family. DDX18/HAS1 subfamily.

The protein localises to the mitochondrion matrix. The enzyme catalyses ATP + H2O = ADP + phosphate + H(+). ATP-dependent RNA helicase required for mitochondrial splicing of group I and II introns. Also required for efficient mitochondrial translation. The polypeptide is ATP-dependent RNA helicase MSS116, mitochondrial (MSS116) (Candida albicans (strain SC5314 / ATCC MYA-2876) (Yeast)).